Consider the following 226-residue polypeptide: Beta-casein (226 aa).

Residues 1-15 (MKVLILACLVALALA) form the signal peptide. Thr-18 bears the Phosphothreonine; in form 5-P mark. Phosphoserine; in form 4-P and form 5-P is present on Ser-21. A Phosphoserine; in form 3-P, form 4-P and form 5-P modification is found at Ser-23. Residues Ser-24 and Ser-25 each carry the phosphoserine; in form 1-P, form 2-P, form 3-P, form 4-P and form 5-P modification.

This sequence belongs to the beta-casein family. In terms of processing, form 1-P is phosphorylated once; half of the molecules are phosphorylated on Ser-24, half on Ser-25. As to expression, mammary gland specific. Secreted in milk.

It is found in the secreted. Functionally, important role in determination of the surface properties of the casein micelles. The sequence is that of Beta-casein (CSN2) from Homo sapiens (Human).